The chain runs to 415 residues: uncharacterized protein (415 aa).

Positions 85, 91, 94, and 175 each coordinate [4Fe-4S] cluster. S-adenosyl-L-methionine contacts are provided by Gln-248, Tyr-276, Glu-297, and Asn-344. Cys-371 functions as the Nucleophile in the catalytic mechanism.

Belongs to the class I-like SAM-binding methyltransferase superfamily. RNA M5U methyltransferase family.

This is an uncharacterized protein from Leptospira interrogans serogroup Icterohaemorrhagiae serovar copenhageni (strain Fiocruz L1-130).